The following is an 88-amino-acid chain: Small ribosomal subunit protein uS12 (88 aa).

The disordered stretch occupies residues 1–24; it reads RKGRRDKIGKVKTAALKGSPQRRG. The residue at position 81 (Asp-81) is a 3-methylthioaspartic acid.

It belongs to the universal ribosomal protein uS12 family. As to quaternary structure, part of the 30S ribosomal subunit. Contacts proteins S8 and S17. May interact with IF1 in the 30S initiation complex.

In terms of biological role, with S4 and S5 plays an important role in translational accuracy. Its function is as follows. Interacts with and stabilizes bases of the 16S rRNA that are involved in tRNA selection in the A site and with the mRNA backbone. Located at the interface of the 30S and 50S subunits, it traverses the body of the 30S subunit contacting proteins on the other side and probably holding the rRNA structure together. The combined cluster of proteins S8, S12 and S17 appears to hold together the shoulder and platform of the 30S subunit. The polypeptide is Small ribosomal subunit protein uS12 (rpsL) (Mycobacterium szulgai).